Consider the following 477-residue polypeptide: Solute carrier family 2, facilitated glucose transporter member 8 (477 aa).

Over 1–25 (MSPEDPQETQPLLRPPEARTPRGRR) the chain is Cytoplasmic. The Dileucine internalization motif motif lies at 12-13 (LL). The chain crosses the membrane as a helical span at residues 26-46 (VFLASFAAALGPLSFGFALGY). Residues 47-70 (SSPAIPSLRRTAPPALRLGDNAAS) are Extracellular-facing. The helical transmembrane segment at 71–91 (WFGAVVTLGAAAGGILGGWLL) threads the bilayer. The Cytoplasmic segment spans residues 92 to 96 (DRAGR). The helical transmembrane segment at 97 to 117 (KLSLLLCTVPFVTGFAVITAA) threads the bilayer. Topologically, residues 118-127 (RDVWMLLGGR) are extracellular. The helical transmembrane segment at 128 to 148 (LLTGLACGVASLVAPVYISEI) threads the bilayer. Over 149-156 (AYPAVRGL) the chain is Cytoplasmic. The helical transmembrane segment at 157–177 (LGSCVQLMVVTGILLAYVAGW) threads the bilayer. Q162 serves as a coordination point for D-glucose. At 178–182 (VLEWR) the chain is on the extracellular side. The chain crosses the membrane as a helical span at residues 183–203 (WLAVLGCVPPTLMLLLMCYMP). At 204–257 (ETPRFLLTQHQYQEAMAALRFLWGSEEGWEEPPVGAEHQGFQLALLRRPGIYKP) the chain is on the cytoplasmic side. The helical transmembrane segment at 258–278 (LIIGISLMVFQQLSGVNAIMF) threads the bilayer. Residues 268–269 (QQ) and N274 contribute to the D-glucose site. The Extracellular segment spans residues 279–293 (YANSIFEEAKFKDSS). A helical membrane pass occupies residues 294 to 314 (LASVTVGIIQVLFTAVAALIM). The Cytoplasmic portion of the chain corresponds to 315–320 (DRAGRR). A helical transmembrane segment spans residues 321–341 (LLLALSGVIMVFSMSAFGTYF). Residues 342–367 (KLTQSLPSNSSHVGLVPIAAEPVDVQ) lie on the Extracellular side of the membrane. N-linked (GlcNAc...) asparagine glycosylation occurs at N350. A helical transmembrane segment spans residues 368–388 (VGLAWLAVGSMCLFIAGFAVG). Residues 389-404 (WGPIPWLLMSEIFPLH) lie on the Cytoplasmic side of the membrane. D-glucose is bound at residue W394. The helical transmembrane segment at 405 to 425 (VKGVATGICVLTNWFMAFLVT) threads the bilayer. Residues 426-438 (KEFSSVMEMLRPY) lie on the Extracellular side of the membrane. Residues 439-459 (GAFWLTAAFCALSVLFTLTVV) traverse the membrane as a helical segment. At 460-477 (PETKGRTLEQVTAHFEGR) the chain is on the cytoplasmic side.

Belongs to the major facilitator superfamily. Sugar transporter (TC 2.A.1.1) family. Glucose transporter subfamily. Interacts with AP2B1. Also able to mediate the transport of dehydroascorbate. Highest level of expression in placenta and testis. Highly expressed in adult and pubertal testis, but not prepubertal testis. Lower levels of expression in brain, liver, heart, kidney, fat and skeletal muscle.

Its subcellular location is the cell membrane. The protein resides in the cytoplasmic vesicle membrane. The catalysed reaction is D-glucose(out) = D-glucose(in). It carries out the reaction D-fructose(out) = D-fructose(in). The enzyme catalyses L-dehydroascorbate(out) = L-dehydroascorbate(in). It catalyses the reaction alpha,alpha-trehalose(in) = alpha,alpha-trehalose(out). Its activity is regulated as follows. Inhibited by cytochalasin B. Insulin-regulated facilitative hexose transporter that mediates the transport of glucose and fructose. Facilitates hepatic influx of dietary trehalose, which in turn inhibits glucose and fructose influx triggering a starvation signal and hepatic autophagy through activation of AMPK and ULK1. Also able to mediate the transport of dehydroascorbate. This is Solute carrier family 2, facilitated glucose transporter member 8 from Mus musculus (Mouse).